A 939-amino-acid chain; its full sequence is Nonsense-mediated mRNA decay factor SMG8 (939 aa).

Disordered regions lie at residues 561 to 600 (KICTPQGEDENEDGETEEADEDTEEKEQAEGDNCSQQLSP) and 617 to 645 (LNESQESSEQLSGSEHESPNSGTSSADTE). Acidic residues predominate over residues 567-587 (GEDENEDGETEEADEDTEEKE). Positions 617–629 (LNESQESSEQLSG) are enriched in low complexity.

It belongs to the SMG8 family.

Its function is as follows. Involved in nonsense-mediated decay (NMD) of mRNAs containing premature stop codons. Probable component of kinase complex containing nonC and recruited to stalled ribosomes. This chain is Nonsense-mediated mRNA decay factor SMG8, found in Drosophila ananassae (Fruit fly).